A 335-amino-acid polypeptide reads, in one-letter code: PA-phosphatase related-family protein DDB_G0275547 (335 aa).

Helical transmembrane passes span 43–63, 93–113, 124–144, 202–222, 226–246, and 254–274; these read VMYL…GILF, VLIP…SLIV, ILGL…FKCF, SITA…FKIF, GHIF…LIGI, and HTFL…LSCY.

Belongs to the PA-phosphatase related phosphoesterase family.

The protein resides in the membrane. This chain is PA-phosphatase related-family protein DDB_G0275547, found in Dictyostelium discoideum (Social amoeba).